The chain runs to 203 residues: Outer-membrane lipoprotein carrier protein (203 aa).

A signal peptide spans 1–21 (MKKQLMTSCLFAAVLAAPAFA).

This sequence belongs to the LolA family. In terms of assembly, monomer.

It localises to the periplasm. Participates in the translocation of lipoproteins from the inner membrane to the outer membrane. Only forms a complex with a lipoprotein if the residue after the N-terminal Cys is not an aspartate (The Asp acts as a targeting signal to indicate that the lipoprotein should stay in the inner membrane). The protein is Outer-membrane lipoprotein carrier protein of Sodalis glossinidius (strain morsitans).